The following is an 886-amino-acid chain: Envelope glycoprotein GP350 (886 aa).

Residues 1-839 are Virion surface-facing; it reads MEAALLVCQY…TSQPRFSNLS (839 aa). 28 N-linked (GlcNAc...) asparagine; by host glycosylation sites follow: Asn47, Asn87, Asn114, Asn166, Asn169, Asn195, Asn229, Asn277, Asn318, Asn328, Asn345, Asn356, Asn378, Asn386, Asn411, Asn435, Asn443, Asn457, Asn497, Asn519, Asn533, Asn554, Asn568, Asn589, Asn603, Asn606, Asn624, and Asn635. The segment at 423 to 810 is disordered; sequence KAPESTTTSP…PSTSSKLRPR (388 aa). Residues 428–437 are compositionally biased toward low complexity; the sequence is TTTSPTLNTT. Polar residues predominate over residues 442 to 488; the sequence is PNTTTGLPSSTHVPTNLTAPASTGPTVSTADVTSPTPAGTTSGASPV. Residues 507–595 are compositionally biased toward low complexity; the sequence is TSPTSAVTTP…PTPNATSPTV (89 aa). The span at 596–637 shows a compositional bias: polar residues; sequence GETSPQANTTNHTLGGTSSTPVVTSPPKNATSAVTTGQHNIT. The segment covering 638–660 has biased composition (low complexity); sequence SSSTSSMSLRPSSISETLSPSTS. Asn662 and Asn680 each carry an N-linked (GlcNAc...) asparagine; by host glycan. Positions 684–699 are enriched in low complexity; sequence VTPASTSTHHVSTSSP. The segment covering 704 to 720 has biased composition (polar residues); sequence GTTSQASGPGNSSTSTK. Residues Asn714, Asn725, Asn734, and Asn759 are each glycosylated (N-linked (GlcNAc...) asparagine; by host). The span at 733–760 shows a compositional bias: polar residues; the sequence is KNATSPQAPSGQKTAVPTVTSTGGKANS. Over residues 761–771 the composition is skewed to low complexity; that stretch reads TTGGKHTTGHG. A compositionally biased stretch (polar residues) spans 773–806; the sequence is RTSTEPTTDYGGDSTTPRTRYNATTYLPPSTSSK. Residues Asn794 and Asn837 are each glycosylated (N-linked (GlcNAc...) asparagine; by host). A helical transmembrane segment spans residues 840-860; it reads MLVLQWASLAVLTLLLLLVMA. Residues 861 to 886 lie on the Intravirion side of the membrane; the sequence is DCAFRRNLSTSHTYTTPPYDDAETYV.

This sequence belongs to the Epstein-Barr GP350 family. Interacts with host CR2. Post-translationally, extensively glycosylated.

It localises to the virion membrane. Its subcellular location is the host membrane. Functionally, initiates virion attachment to host B-lymphocyte cell, leading to virus entry. Acts by binding to host CR2 at the surface of B-lymphocytes, facilitating the binding of viral glycoprotein gp42 to HLA class II molecules. Attachment triggers virion-host membrane fusion and invasion of the host cell. In Homo sapiens (Human), this protein is Envelope glycoprotein GP350.